The sequence spans 93 residues: UPF0358 protein RBAM_014700 (93 aa).

Belongs to the UPF0358 family.

The sequence is that of UPF0358 protein RBAM_014700 from Bacillus velezensis (strain DSM 23117 / BGSC 10A6 / LMG 26770 / FZB42) (Bacillus amyloliquefaciens subsp. plantarum).